Here is a 354-residue protein sequence, read N- to C-terminus: Protein-glutamate methylesterase/protein-glutamine glutaminase (354 aa).

The Response regulatory domain maps to 7-124; the sequence is KVLCVDDSAL…REGMLEYTEM (118 aa). Asp-58 carries the post-translational modification 4-aspartylphosphate. Positions 156–348 constitute a CheB-type methylesterase domain; the sequence is LLSSEKVIII…AALMKRAEAS (193 aa). Catalysis depends on residues Ser-168, His-194, and Asp-290.

Belongs to the CheB family. Post-translationally, phosphorylated by CheA. Phosphorylation of the N-terminal regulatory domain activates the methylesterase activity.

It is found in the cytoplasm. The enzyme catalyses [protein]-L-glutamate 5-O-methyl ester + H2O = L-glutamyl-[protein] + methanol + H(+). It catalyses the reaction L-glutaminyl-[protein] + H2O = L-glutamyl-[protein] + NH4(+). Involved in chemotaxis. Part of a chemotaxis signal transduction system that modulates chemotaxis in response to various stimuli. Catalyzes the demethylation of specific methylglutamate residues introduced into the chemoreceptors (methyl-accepting chemotaxis proteins or MCP) by CheR. Also mediates the irreversible deamidation of specific glutamine residues to glutamic acid. This Chromohalobacter salexigens (strain ATCC BAA-138 / DSM 3043 / CIP 106854 / NCIMB 13768 / 1H11) protein is Protein-glutamate methylesterase/protein-glutamine glutaminase.